Reading from the N-terminus, the 167-residue chain is MKKLYTSYGTYGFLNQIKINNPSHHLFQFSTADSSVIFEETEENTVLKSPSIYEVIKEIGAFNEDHFYCAIFIPSTEDHVYQLEKKLISVDDNFKNFGGFKSYRLLRPVKGTTYKIYFGFADRQTYEDFKNSDAFKDHFSKEALSHYFGSSGQHSSYFERYLYPIKE.

A phosphohistidine mark is found at histidine 66, histidine 79, and histidine 154. An ABM domain is found at 67–158 (FYCAIFIPST…GSSGQHSSYF (92 aa)).

The protein belongs to the TRAP family. In terms of processing, each of the three conserved histidine residues contributes to TRAP phosphorylation. Phosphorylation is essential for TRAP activity. Phosphorylation of TRAP is activated by RAP and necessary for the induction of RNAIII gene expression but not for ongoing transcription. TRAP is dephosphorylated from the mid-exponential phase of growth, which is when agr is activated and AIP is produced. RIP acts by inhibiting TRAP phosphorylation.

It is found in the membrane. Functionally, signal transduction protein, which is a major regulator of staphylococcal pathogenesis. Phosphorylated TRAP leads to the activation of agr system and consequent RNAIII synthesis resulting in the expression of several virulence factors. Up-regulates the expression of most toxins and genes known to be necessary for biofilm formation. The sequence is that of Signal transduction protein TRAP (traP) from Staphylococcus aureus (strain bovine RF122 / ET3-1).